The following is a 133-amino-acid chain: Probable mitochondrial pyruvate carrier 2 (133 aa).

Transmembrane regions (helical) follow at residues 40 to 57 (VFFW…AGLA), 73 to 91 (ALFA…ITPI), and 100 to 116 (FFVM…IAHY).

This sequence belongs to the mitochondrial pyruvate carrier (MPC) (TC 2.A.105) family.

The protein resides in the mitochondrion inner membrane. Functionally, may mediate the uptake of pyruvate into mitochondria. The chain is Probable mitochondrial pyruvate carrier 2 from Caenorhabditis elegans.